Consider the following 531-residue polypeptide: Zinc finger protein 703-B (531 aa).

The span at 1-10 (MNCSPPGSCT) shows a compositional bias: polar residues. 3 disordered regions span residues 1-28 (MNCS…ATLA), 88-249 (SQIG…VAPI), and 295-318 (VGNQ…LTGA). Composition is skewed to low complexity over residues 19–28 (TPATPCATLA) and 113–122 (RSSSLKLGES). The segment covering 171–180 (SPSSRVSSPG) has biased composition (polar residues). The segment covering 183–198 (CESKNNESQEKKEPEV) has biased composition (basic and acidic residues). Over residues 199–215 (NKSSLETSQANPTLTRA) the composition is skewed to polar residues. The segment covering 216-227 (SISNSSAESSQS) has biased composition (low complexity). A C2H2-type zinc finger spans residues 404 to 432 (HICNWVSASGPCDKRFATSEELLAHLRTH).

It belongs to the Elbow/Noc family.

It is found in the nucleus. It localises to the cytoplasm. Transcriptional corepressor which does not bind directly to DNA and may regulate transcription through recruitment of histone deacetylases to gene promoters. Regulates cell adhesion, migration and proliferation. Involved in specification of the lateral neural plate border (NPB). May be required for segmental gene expression during hindbrain development. This chain is Zinc finger protein 703-B (znf703-b), found in Xenopus laevis (African clawed frog).